We begin with the raw amino-acid sequence, 489 residues long: Putative L,D-transpeptidase HI_1667 (489 aa).

The chain crosses the membrane as a helical span at residues 10–29; sequence LSLFALSLSMMMSGCVLVGL. Residues 254-433 form the L,D-TPase catalytic domain; it reads NGIFVNIPSY…ETRKNTVLAS (180 aa). Residue H384 is the Proton donor/acceptor of the active site. C403 acts as the Nucleophile in catalysis.

Belongs to the YkuD family.

It localises to the membrane. Its pathway is cell wall biogenesis; peptidoglycan biosynthesis. This Haemophilus influenzae (strain ATCC 51907 / DSM 11121 / KW20 / Rd) protein is Putative L,D-transpeptidase HI_1667.